A 96-amino-acid polypeptide reads, in one-letter code: Co-chaperonin GroES 1 (96 aa).

The protein belongs to the GroES chaperonin family. Heptamer of 7 subunits arranged in a ring. Interacts with the chaperonin GroEL.

It is found in the cytoplasm. In terms of biological role, together with the chaperonin GroEL, plays an essential role in assisting protein folding. The GroEL-GroES system forms a nano-cage that allows encapsulation of the non-native substrate proteins and provides a physical environment optimized to promote and accelerate protein folding. GroES binds to the apical surface of the GroEL ring, thereby capping the opening of the GroEL channel. The polypeptide is Co-chaperonin GroES 1 (Vibrio vulnificus (strain CMCP6)).